The chain runs to 856 residues: V-type proton ATPase 116 kDa subunit a 2 (856 aa).

Residues 1–393 (MGSLFRSESM…DAYGVGSYRE (393 aa)) lie on the Cytoplasmic side of the membrane. The chain crosses the membrane as a helical span at residues 394–412 (VNPALFTIITFPFLFAVMF). The Vacuolar portion of the chain corresponds to 413-414 (GD). The chain crosses the membrane as a helical span at residues 415–431 (FGHGFVMFLFALLLVLN). Residues 432–445 (ENHPRLSQSQEILR) lie on the Cytoplasmic side of the membrane. Residues 446 to 475 (MFFDGRYILLLMGLFSVYTGLIYNDCFSKS) form a helical membrane-spanning segment. Residues 476-549 (VNLFGSGWNV…ATNRLTFLNS (74 aa)) are Vacuolar-facing. A helical membrane pass occupies residues 550-569 (FKMKMSVILGIFHMTFGVVL). The Cytoplasmic segment spans residues 570-587 (GIFNHLHFRKKFNVYLVS). Residues 588-608 (VPEILFMLCIFGYLIFMIIYK) traverse the membrane as a helical segment. Over 609–651 (WLAYSAETSREAPSILIEFINMFLFPTSKTHGLYPGQAHVQRV) the chain is Vacuolar. Residues 652–671 (LVALTVLAVPVLFLGKPLFL) traverse the membrane as a helical segment. Residues 672 to 739 (LWLHNGRNCF…EILMTQAIHS (68 aa)) lie on the Cytoplasmic side of the membrane. 2 positions are modified to phosphoserine: Ser695 and Ser700. Residues 740-764 (IEYCLGCISNTASYLRLWALSLAHA) form a helical membrane-spanning segment. The Vacuolar segment spans residues 765–785 (QLSDVLWAMLMRVGLRVDTTY). Residues 786–824 (GVLLLLPVMAFFAVLTIFILLVMEGLSAFLHAIRLHWVE) traverse the membrane as a helical segment. The Cytoplasmic segment spans residues 825–856 (FQNKFYVGAGTKFVPFSFSLLSSKFSNDDSIA).

Belongs to the V-ATPase 116 kDa subunit family. As to quaternary structure, V-ATPase is a heteromultimeric enzyme made up of two complexes: the ATP-hydrolytic V1 complex and the proton translocation V0 complex. The V1 complex consists of three catalytic AB heterodimers that form a heterohexamer, three peripheral stalks each consisting of EG heterodimers, one central rotor including subunits D and F, and the regulatory subunits C and H. The proton translocation complex V0 consists of the proton transport subunit a, a ring of proteolipid subunits c9c'', rotary subunit d, subunits e and f, and the accessory subunits ATP6AP1/Ac45 and ATP6AP2/PRR. Directly interacts with PSCD2 through its N-terminal cytosolic tail in an intra-endosomal acidification-dependent manner. Disruption of this interaction results in the inhibition of endocytosis. Interacts with SPAAR. As to expression, relatively high expression in kidney and liver. Lower levels in the spleen, testis, and skeletal muscle. Also expressed in the thymus.

Its subcellular location is the cell membrane. The protein resides in the endosome membrane. Functionally, subunit of the V0 complex of vacuolar(H+)-ATPase (V-ATPase), a multisubunit enzyme composed of a peripheral complex (V1) that hydrolyzes ATP and a membrane integral complex (V0) that translocates protons. V-ATPase is responsible for acidifying and maintaining the pH of intracellular compartments and in some cell types, is targeted to the plasma membrane, where it is responsible for acidifying the extracellular environment. Essential component of the endosomal pH-sensing machinery. May play a role in maintaining the Golgi functions, such as glycosylation maturation, by controlling the Golgi pH. In aerobic conditions, involved in intracellular iron homeostasis, thus triggering the activity of Fe(2+) prolyl hydroxylase (PHD) enzymes, and leading to HIF1A hydroxylation and subsequent proteasomal degradation. This chain is V-type proton ATPase 116 kDa subunit a 2 (Atp6v0a2), found in Mus musculus (Mouse).